The sequence spans 541 residues: Membrane protein insertase YidC (541 aa).

Transmembrane regions (helical) follow at residues 6-26 (FFLI…WEIT), 356-376 (IIHS…LAFY), 430-450 (LPIL…LEMV), 463-483 (LSAP…MFIQ), and 498-518 (IMMA…SGLV).

Belongs to the OXA1/ALB3/YidC family. Type 1 subfamily. Interacts with the Sec translocase complex via SecD. Specifically interacts with transmembrane segments of nascent integral membrane proteins during membrane integration.

The protein resides in the cell inner membrane. In terms of biological role, required for the insertion and/or proper folding and/or complex formation of integral membrane proteins into the membrane. Involved in integration of membrane proteins that insert both dependently and independently of the Sec translocase complex, as well as at least some lipoproteins. Aids folding of multispanning membrane proteins. The protein is Membrane protein insertase YidC of Vesicomyosocius okutanii subsp. Calyptogena okutanii (strain HA).